A 157-amino-acid chain; its full sequence is Small ribosomal subunit protein uS7 (157 aa).

The protein belongs to the universal ribosomal protein uS7 family. In terms of assembly, part of the 30S ribosomal subunit. Contacts proteins S9 and S11.

Its function is as follows. One of the primary rRNA binding proteins, it binds directly to 16S rRNA where it nucleates assembly of the head domain of the 30S subunit. Is located at the subunit interface close to the decoding center, probably blocks exit of the E-site tRNA. The sequence is that of Small ribosomal subunit protein uS7 from Roseiflexus sp. (strain RS-1).